The primary structure comprises 111 residues: Large ribosomal subunit protein uL22 (111 aa).

Belongs to the universal ribosomal protein uL22 family. As to quaternary structure, part of the 50S ribosomal subunit.

This protein binds specifically to 23S rRNA; its binding is stimulated by other ribosomal proteins, e.g. L4, L17, and L20. It is important during the early stages of 50S assembly. It makes multiple contacts with different domains of the 23S rRNA in the assembled 50S subunit and ribosome. In terms of biological role, the globular domain of the protein is located near the polypeptide exit tunnel on the outside of the subunit, while an extended beta-hairpin is found that lines the wall of the exit tunnel in the center of the 70S ribosome. This Clostridium beijerinckii (strain ATCC 51743 / NCIMB 8052) (Clostridium acetobutylicum) protein is Large ribosomal subunit protein uL22.